A 493-amino-acid polypeptide reads, in one-letter code: Fizzy-related protein homolog (493 aa).

Disordered regions lie at residues 31-51 (LTPA…FIPS), 64-88 (INEN…GKDG), and 105-166 (EKVQ…SPRK). The residue at position 32 (Thr32) is a Phosphothreonine. Positions 32–42 (TPANSPVSSPS) are enriched in polar residues. Ser36 is subject to Phosphoserine. At Lys69 the chain carries N6-acetyllysine. Composition is skewed to basic and acidic residues over residues 76 to 86 (KAKDATSDNGK) and 106 to 126 (KVQD…EHKG). Phosphoserine occurs at positions 133, 138, 146, and 151. The span at 146–160 (SPYSLSPVSNKSQKL) shows a compositional bias: polar residues. The residue at position 159 (Lys159) is an N6-acetyllysine. WD repeat units lie at residues 182 to 222 (PELQ…VTRL), 227 to 266 (VEGD…KLSM), 269 to 306 (GHTA…LQSE), 311 to 350 (GHRQ…PVQQ), 353 to 395 (EHLA…PLQC), 397 to 438 (DTGS…QVAK), and 441 to 480 (GHSY…RSTK).

This sequence belongs to the WD repeat CDC20/Fizzy family. In terms of assembly, the unphosphorylated form interacts with APC/C during mitosis. Interacts with NINL. Interacts (in complex with the anaphase promoting complex APC) with MAD2L2; inhibits FZR1-mediated APC/C activation. Interacts with SIRT2. Interacts with USP37. Interacts (via WD repeats) with MAK. Interacts with RBBP8/CtIP; this interaction leads to RBBP8 proteasomal degradation. Interacts with HECW2. Interacts with SASS6; the interaction is regulated by CENATAC and leads to SASS6 proteasomal degradation. Interacts (via N-terminus) with CCNF. Interacts with CDC6. Interacts with TK1 (via the KEN box). Acetylated. Deacetylated by SIRT2 at Lys-69 and Lys-159; deacetylation enhances the interaction of FZR1 with CDC27, leading to activation of anaphase promoting complex/cyclosome (APC/C). Post-translationally, following DNA damage, it is dephosphorylated by CDC14B in G2 phase, leading to its reassociation with the APC/C, and allowing an efficient G2 DNA damage checkpoint. Phosphorylated by MAK.

Its pathway is protein modification; protein ubiquitination. Functionally, substrate-specific adapter for the anaphase promoting complex/cyclosome (APC/C) E3 ubiquitin-protein ligase complex. Associates with the APC/C in late mitosis, in replacement of CDC20, and activates the APC/C during anaphase and telophase. The APC/C remains active in degrading substrates to ensure that positive regulators of the cell cycle do not accumulate prematurely. At the G1/S transition FZR1 is phosphorylated, leading to its dissociation from the APC/C. Following DNA damage, it is required for the G2 DNA damage checkpoint: its dephosphorylation and reassociation with the APC/C leads to the ubiquitination of PLK1, preventing entry into mitosis. Acts as an adapter for APC/C to target the DNA-end resection factor RBBP8/CtIP for ubiquitination and subsequent proteasomal degradation. Through the regulation of RBBP8/CtIP protein turnover, may play a role in DNA damage response, favoring DNA double-strand repair through error-prone non-homologous end joining (NHEJ) over error-free, RBBP8-mediated homologous recombination (HR). This is Fizzy-related protein homolog (Fzr1) from Mus musculus (Mouse).